Consider the following 514-residue polypeptide: MSLTEEIKKRRTFAIISHPDAGKTTITEQLLYFGGEIREAGTVKGKKSGTFAKSDWMDIEKQRGISVTSSVMQFDYAGKRVNILDTPGHEDFSEDTYRTLMAVDAAVMVVDSAKGIEAQTKKLFEVVKHRNIPVFTFINKLDRDGREPLELLEELEEVLGIASYPMNWPIGMGRAFEGLYDLHNKRLELYKGDERFASIEDGDQLFANNPFYEQVKEDIELLQEAGNDFSEQAILDGDLTPVFFGSALTNFGVQTFLDTFLEFAPEPHGHKTTEGNVVDPLTKDFSGFVFKIQANMDPKHRDRIAFVRIVSGEFERGMGVNLTRTGKGAKLSNVTQFMAESRENVTNAVAGDIIGVYDTGTYQVGDTLTVGKNKFEFEPLPTFTPEIFMKVSPKNVMKQKSFHKGIEQLVQEGAIQLYKNYQTGEYMLGAVGQLQFEVFKHRMEGEYNAEVVMTPMGKKTVRWISEDDLDQHMSSSRNILAKDRFDQPVFLFENDFALRWFADKYPDVTLEEKM.

Positions 8–268 (KKRRTFAIIS…TFLEFAPEPH (261 aa)) constitute a tr-type G domain. GTP is bound by residues 17-24 (SHPDAGKT), 85-89 (DTPGH), and 139-142 (NKLD).

Belongs to the TRAFAC class translation factor GTPase superfamily. Classic translation factor GTPase family. PrfC subfamily.

The protein localises to the cytoplasm. In terms of biological role, increases the formation of ribosomal termination complexes and stimulates activities of RF-1 and RF-2. It binds guanine nucleotides and has strong preference for UGA stop codons. It may interact directly with the ribosome. The stimulation of RF-1 and RF-2 is significantly reduced by GTP and GDP, but not by GMP. The chain is Peptide chain release factor 3 from Streptococcus pyogenes serotype M49 (strain NZ131).